The chain runs to 312 residues: Phosphate system positive regulatory protein PHO4 (312 aa).

Residues 1 to 31 (MGRTTSEGIHGFVDDLEPKSSILDKVGDFIT) are interaction with PHO80. The disordered stretch occupies residues 35–71 (KRHDGREDFNEQNDELNSQENHNSSENGNENENEQDS). Residues 49–62 (ELNSQENHNSSENG) show a composition bias toward low complexity. A 9aaTAD motif is present at residues 75–83 (DDLDRAFEL). Positions 75–99 (DDLDRAFELVEGMDMDWMMPSHAHH) are transcription activation domain. Phosphoserine; by PHO85 occurs at positions 100, 114, 128, and 152. Polar residues-rich tracts occupy residues 138–154 (TTSA…SSPY) and 196–210 (PSNS…TAKT). The interval 138-259 (TTSANKVTKN…DKRESHKHAE (122 aa)) is disordered. A Nuclear localization signal motif is present at residues 140–166 (SANKVTKNKSNSSPYLNKRRGKPGPDS). The interval 156–200 (NKRRGKPGPDSATSLFELPDSVIPTPKPKPKPKQYPKVILPSNST) is interaction with PHO80. The interval 201–218 (RRVSPVTAKTSSSAEGVV) is interaction with PHO2. The tract at residues 203–227 (VSPVTAKTSSSAEGVVVASESPVIA) is involved in oligomerization. Position 204 is a phosphoserine (Ser204). Low complexity predominate over residues 211-235 (SSSAEGVVVASESPVIAPHGSSHSR). Residue Ser223 is modified to Phosphoserine; by PHO85. 2 positions are modified to phosphoserine: Ser242 and Ser243. Residues 248 to 259 (DDDKRESHKHAE) show a composition bias toward basic and acidic residues. The bHLH domain maps to 250–306 (DKRESHKHAEQARRNRLAVALHELASLIPAEWKQQNVSAAPSKATTVEAACRYIRHL).

As to quaternary structure, binds DNA as a homodimer. Interacts with transcription factor PHO2 and binds cooperatively to PHO5 UAS. Interacts with the cyclin-CDK PHO80-PHO85 and the CDK inhibitor (CKI) PHO81. In terms of processing, phosphorylated by the cyclin-CDK PHO80-PHO85 at five residues under high-phosphate conditions, preventing PHO4 from activating the structural PHO genes. Phosphorylation of Ser-114 and Ser-128 promotes nuclear export. Phosphorylation of Ser-152 decreases nuclear import. Phosphorylation of Ser-223 decreases the binding affinity for PHO2.

It is found in the cytoplasm. Its subcellular location is the nucleus. Transcriptional activator that regulates the expression of repressible phosphatase under phosphate starvation conditions. Binds to the upstream activating sequence (UAS) of several phosphatase encoding PHO genes. Inhibited by the cyclin-CDK PHO80-PHO85 under high-phosphate conditions. The chain is Phosphate system positive regulatory protein PHO4 (PHO4) from Saccharomyces cerevisiae (strain ATCC 204508 / S288c) (Baker's yeast).